The chain runs to 185 residues: MDIDPYKEFGASVELLSFLPSDFFPSVRDLLDTSAALYREALESPEHCSPHHTALRQAILCWGELMTLATWVGNNLQDPASRDQVVNYVNTNMGLKIRQLLWFHISCLTFGRQTVLEYLVSFGVWIRTPPPYRPPNAPILSTLPETTVVRRRDRGRSPRRRTPSPRRRRSQSPRRRRSQSRESQC.

The tract at residues 135–185 (PNAPILSTLPETTVVRRRDRGRSPRRRTPSPRRRRSQSPRRRRSQSRESQC) is disordered. The segment covering 149-178 (VRRRDRGRSPRRRTPSPRRRRSQSPRRRRS) has biased composition (basic residues). Residues Ser-157, Ser-164, and Ser-172 each carry the phosphoserine; by host modification. One copy of the 1; half-length repeat lies at 157 to 163 (SPRRRTP). The segment at 157–179 (SPRRRTPSPRRRRSQSPRRRRSQ) is 3 X 8 AA repeats of S-P-R-R-R-[PR]-S-Q. Positions 160–177 (RRTPSPRRRRSQSPRRRR) match the Bipartite nuclear localization signal motif. A run of 2 repeats spans residues 164-171 (SPRRRRSQ) and 172-179 (SPRRRRSQ). An RNA binding region spans residues 179–185 (QSRESQC).

It belongs to the orthohepadnavirus core antigen family. As to quaternary structure, homodimerizes, then multimerizes. Interacts with cytosol exposed regions of viral L glycoprotein present in the reticulum-to-Golgi compartment. Interacts with human FLNB. Phosphorylated form interacts with host importin alpha; this interaction depends on the exposure of the NLS, which itself depends upon genome maturation and/or phosphorylation of the capsid protein. Interacts with host NUP153. Post-translationally, phosphorylated by host SRPK1, SRPK2, and maybe protein kinase C or GAPDH. Phosphorylation is critical for pregenomic RNA packaging. Protein kinase C phosphorylation is stimulated by HBx protein and may play a role in transport of the viral genome to the nucleus at the late step during the viral replication cycle.

It is found in the virion. It localises to the host cytoplasm. Functionally, self assembles to form an icosahedral capsid. Most capsids appear to be large particles with an icosahedral symmetry of T=4 and consist of 240 copies of capsid protein, though a fraction forms smaller T=3 particles consisting of 180 capsid proteins. Entering capsids are transported along microtubules to the nucleus. Phosphorylation of the capsid is thought to induce exposure of nuclear localization signal in the C-terminal portion of the capsid protein that allows binding to the nuclear pore complex via the importin (karyopherin-) alpha and beta. Capsids are imported in intact form through the nuclear pore into the nuclear basket, where it probably binds NUP153. Only capsids that contain the mature viral genome can release the viral DNA and capsid protein into the nucleoplasm. Immature capsids get stuck in the basket. Capsids encapsulate the pre-genomic RNA and the P protein. Pre-genomic RNA is reverse-transcribed into DNA while the capsid is still in the cytoplasm. The capsid can then either be directed to the nucleus, providing more genomes for transcription, or bud through the endoplasmic reticulum to provide new virions. The chain is Capsid protein from Hepatitis B virus genotype A3 (isolate Cameroon/CMR711/1994) (HBV-A).